A 756-amino-acid polypeptide reads, in one-letter code: NADP-dependent malic enzyme (756 aa).

The interval 1–428 is malic enzyme; sequence MTEQLRQAAL…KLTQFVYKTS (428 aa). Catalysis depends on Tyr39, which acts as the Proton donor. Residue Lys94 is the Proton acceptor of the active site. A divalent metal cation contacts are provided by Glu136, Asp137, and Asp162. NADP(+) is bound by residues 195 to 198, Asn288, and Asn320; that span reads AGAA. The interval 429–756 is phosphate acetyltransferase; the sequence is LFMRPIFSQA…AYAAVKAQQE (328 aa).

In the N-terminal section; belongs to the malic enzymes family. It in the C-terminal section; belongs to the phosphate acetyltransferase and butyryltransferase family. Mg(2+) is required as a cofactor. The cofactor is Mn(2+).

It catalyses the reaction (S)-malate + NADP(+) = pyruvate + CO2 + NADPH. The catalysed reaction is oxaloacetate + H(+) = pyruvate + CO2. The sequence is that of NADP-dependent malic enzyme (maeB) from Haemophilus influenzae (strain ATCC 51907 / DSM 11121 / KW20 / Rd).